Here is a 284-residue protein sequence, read N- to C-terminus: Polyamine aminopropyltransferase (284 aa).

A PABS domain is found at 4–238 (EVWNTERLHD…GPMALGWGSH (235 aa)). Gln-33 contacts S-methyl-5'-thioadenosine. Spermidine contacts are provided by His-64 and Asp-88. S-methyl-5'-thioadenosine is bound by residues Glu-108 and 140–141 (DG). Residue Asp-158 is the Proton acceptor of the active site. 158 to 161 (DSTD) lines the spermidine pocket. Pro-165 provides a ligand contact to S-methyl-5'-thioadenosine.

This sequence belongs to the spermidine/spermine synthase family. Homodimer or homotetramer.

It localises to the cytoplasm. It carries out the reaction S-adenosyl 3-(methylsulfanyl)propylamine + putrescine = S-methyl-5'-thioadenosine + spermidine + H(+). The protein operates within amine and polyamine biosynthesis; spermidine biosynthesis; spermidine from putrescine: step 1/1. Catalyzes the irreversible transfer of a propylamine group from the amino donor S-adenosylmethioninamine (decarboxy-AdoMet) to putrescine (1,4-diaminobutane) to yield spermidine. The protein is Polyamine aminopropyltransferase of Ruegeria sp. (strain TM1040) (Silicibacter sp.).